A 363-amino-acid chain; its full sequence is Phosphoribosylformylglycinamidine cyclo-ligase (363 aa).

This sequence belongs to the AIR synthase family.

The protein localises to the cytoplasm. The enzyme catalyses 2-formamido-N(1)-(5-O-phospho-beta-D-ribosyl)acetamidine + ATP = 5-amino-1-(5-phospho-beta-D-ribosyl)imidazole + ADP + phosphate + H(+). The protein operates within purine metabolism; IMP biosynthesis via de novo pathway; 5-amino-1-(5-phospho-D-ribosyl)imidazole from N(2)-formyl-N(1)-(5-phospho-D-ribosyl)glycinamide: step 2/2. This Parvibaculum lavamentivorans (strain DS-1 / DSM 13023 / NCIMB 13966) protein is Phosphoribosylformylglycinamidine cyclo-ligase.